Here is a 448-residue protein sequence, read N- to C-terminus: Phosphoglucosamine mutase (448 aa).

The active-site Phosphoserine intermediate is Ser100. Residues Ser100, Asp240, Asp242, and Asp244 each coordinate Mg(2+). Ser100 is subject to Phosphoserine.

Belongs to the phosphohexose mutase family. Mg(2+) serves as cofactor. Post-translationally, activated by phosphorylation.

The catalysed reaction is alpha-D-glucosamine 1-phosphate = D-glucosamine 6-phosphate. In terms of biological role, catalyzes the conversion of glucosamine-6-phosphate to glucosamine-1-phosphate. This Bacillus cereus (strain B4264) protein is Phosphoglucosamine mutase.